Consider the following 556-residue polypeptide: Formate--tetrahydrofolate ligase 1 (556 aa).

65 to 72 (TPAGEGKS) provides a ligand contact to ATP.

The protein belongs to the formate--tetrahydrofolate ligase family.

The enzyme catalyses (6S)-5,6,7,8-tetrahydrofolate + formate + ATP = (6R)-10-formyltetrahydrofolate + ADP + phosphate. It functions in the pathway one-carbon metabolism; tetrahydrofolate interconversion. The polypeptide is Formate--tetrahydrofolate ligase 1 (Streptococcus pyogenes serotype M1).